The following is a 395-amino-acid chain: HORMA domain-containing protein 1 (395 aa).

One can recognise an HORMA domain in the interval 24–226 (QQSLVLVKRL…TPFHTFKVKV (203 aa)). Positions 329–395 (DVSESKTRSG…RKFSEPKEYV (67 aa)) are disordered. A compositionally biased stretch (polar residues) spans 344–353 (KMANGNQPVK). Residues 354 to 363 (SSKENRKRNQ) are compositionally biased toward basic and acidic residues. Position 377 is a phosphoserine (S377). Residues 384–387 (KRRK) carry the Nuclear localization signal motif.

As to quaternary structure, interacts with HORMAD2. Interacts with IHO1. In terms of processing, phosphorylated at Ser-378 in a SPO11-dependent manner.

It is found in the nucleus. The protein resides in the chromosome. In terms of biological role, plays a key role in meiotic progression. Regulates 3 different functions during meiosis: ensures that sufficient numbers of processed DNA double-strand breaks (DSBs) are available for successful homology search by increasing the steady-state numbers of single-stranded DSB ends. Promotes synaptonemal-complex formation independently of its role in homology search. Plays a key role in the male mid-pachytene checkpoint and the female meiotic prophase checkpoint: required for efficient build-up of ATR activity on unsynapsed chromosome regions, a process believed to form the basis of meiotic silencing of unsynapsed chromatin (MSUC) and meiotic prophase quality control in both sexes. The sequence is that of HORMA domain-containing protein 1 (HORMAD1) from Canis lupus familiaris (Dog).